Reading from the N-terminus, the 38-residue chain is Photosystem I reaction center subunit IX (38 aa).

The chain crosses the membrane as a helical span at residues phenylalanine 4–isoleucine 24.

The protein belongs to the PsaJ family.

Its subcellular location is the cellular thylakoid membrane. Its function is as follows. May help in the organization of the PsaE and PsaF subunits. This Synechococcus sp. (strain CC9605) protein is Photosystem I reaction center subunit IX.